A 455-amino-acid polypeptide reads, in one-letter code: tRNA modification GTPase MnmE (455 aa).

Residues Arg24, Glu81, and Lys120 each coordinate (6S)-5-formyl-5,6,7,8-tetrahydrofolate. The region spanning 216 to 378 (GMTVVIAGRP…LREHLKACMG (163 aa)) is the TrmE-type G domain. Position 226 (Asn226) interacts with K(+). GTP-binding positions include 226–231 (NAGKSS), 245–251 (TDIAGTT), 270–273 (DTAG), 335–338 (NKAD), and 359–361 (SAR). Ser230 serves as a coordination point for Mg(2+). K(+) is bound by residues Thr245, Ile247, and Thr250. Position 251 (Thr251) interacts with Mg(2+). Lys455 is a (6S)-5-formyl-5,6,7,8-tetrahydrofolate binding site.

This sequence belongs to the TRAFAC class TrmE-Era-EngA-EngB-Septin-like GTPase superfamily. TrmE GTPase family. As to quaternary structure, homodimer. Heterotetramer of two MnmE and two MnmG subunits. K(+) is required as a cofactor.

Its subcellular location is the cytoplasm. Functionally, exhibits a very high intrinsic GTPase hydrolysis rate. Involved in the addition of a carboxymethylaminomethyl (cmnm) group at the wobble position (U34) of certain tRNAs, forming tRNA-cmnm(5)s(2)U34. The polypeptide is tRNA modification GTPase MnmE (Pseudomonas aeruginosa (strain UCBPP-PA14)).